The sequence spans 1127 residues: Testis-expressed protein 2 (1127 aa).

Disordered stretches follow at residues 1–27 (MTSL…HVQR) and 133–279 (AVSP…SFFK). A compositionally biased stretch (low complexity) spans 133–187 (AVSPGSSSSGPLASSPSVSSLSEQKTSSSSPLSSPSKSPILSSSASTSTLSSAKP). A Phosphoserine modification is found at Ser-196. The span at 249 to 275 (QFTQPRNTGGDSKTAPSSPLTSPSDTR) shows a compositional bias: polar residues. Residue Thr-262 is modified to Phosphothreonine. Residues Ser-265, Ser-266, Ser-270, and Ser-295 each carry the phosphoserine modification. Asn-330 carries an N-linked (GlcNAc...) asparagine glycan. Residues 348-386 (EEECDSEGDGYGSDSNIPRSDHPKSTGEPTREIELKSSQ) are disordered. Residues 366–382 (RSDHPKSTGEPTREIEL) are compositionally biased toward basic and acidic residues. A run of 2 helical transmembrane segments spans residues 475-495 (TLGF…PHYV) and 497-517 (GLFL…WFFT). 4 disordered regions span residues 648–685 (KAQT…QRDQ), 715–764 (KKSS…QKEL), 786–816 (QESR…PPSE), and 947–980 (DEES…GYVG). A compositionally biased stretch (basic and acidic residues) spans 650 to 670 (QTDKETSEEKPPAEGSEDPKK). Phosphoserine is present on residues Ser-732, Ser-738, Ser-744, Ser-748, Ser-751, Ser-798, and Ser-815. The span at 735 to 750 (NSPSGHLTHSRSSSKG) shows a compositional bias: polar residues. Over residues 787–804 (ESRSPQRSPLQSAESSPT) the composition is skewed to polar residues. In terms of domain architecture, SMP-LTD spans 816–1101 (EEEEQEAWVN…MPNMDDVYIT (286 aa)). Positions 947–962 (DEESSSAGSSEEDDAP) are enriched in acidic residues.

It is found in the endoplasmic reticulum membrane. Its subcellular location is the nucleus membrane. During endoplasmic reticulum (ER) stress or when cellular ceramide levels increase, may induce contacts between the ER and medial-Golgi complex to facilitate non-vesicular transport of ceramides from the ER to the Golgi complex where they are converted to complex sphingolipids, preventing toxic ceramide accumulation. This is Testis-expressed protein 2 (TEX2) from Homo sapiens (Human).